A 173-amino-acid polypeptide reads, in one-letter code: Translation initiation factor IF-3 (173 aa).

Belongs to the IF-3 family. In terms of assembly, monomer.

It is found in the cytoplasm. IF-3 binds to the 30S ribosomal subunit and shifts the equilibrium between 70S ribosomes and their 50S and 30S subunits in favor of the free subunits, thus enhancing the availability of 30S subunits on which protein synthesis initiation begins. The polypeptide is Translation initiation factor IF-3 (Methylorubrum extorquens (strain CM4 / NCIMB 13688) (Methylobacterium extorquens)).